The primary structure comprises 817 residues: Leucine--tRNA ligase (817 aa).

Positions 42–52 (PYPSGKLHMGH) match the 'HIGH' region motif. The 'KMSKS' region motif lies at 576 to 580 (KMSKS). Lys579 provides a ligand contact to ATP.

This sequence belongs to the class-I aminoacyl-tRNA synthetase family.

It is found in the cytoplasm. It catalyses the reaction tRNA(Leu) + L-leucine + ATP = L-leucyl-tRNA(Leu) + AMP + diphosphate. The polypeptide is Leucine--tRNA ligase (Methylobacillus flagellatus (strain ATCC 51484 / DSM 6875 / VKM B-1610 / KT)).